The following is a 332-amino-acid chain: Protein FAM131B (332 aa).

Residues 1 to 22 (MDSTSSLHGSSLHRPSTEQTRT) form a disordered region. Residue serine 47 is modified to Phosphoserine. The tract at residues 95–114 (PTIQPQHSHEAVRRDTDAYS) is disordered. Residues 101–111 (HSHEAVRRDTD) are compositionally biased toward basic and acidic residues. Serine 114 and serine 117 each carry phosphoserine. A disordered region spans residues 221 to 332 (LGPAFDDSQP…FDEEEGDANN (112 aa)). 2 stretches are compositionally biased toward basic and acidic residues: residues 272-281 (PVEEEKRPLA) and 288-302 (AGCR…REDP). 3 positions are modified to phosphoserine: serine 295, serine 297, and serine 313. Threonine 316 is subject to Phosphothreonine. 3 positions are modified to phosphoserine: serine 317, serine 318, and serine 322. A compositionally biased stretch (acidic residues) spans 323 to 332 (FDEEEGDANN).

The protein belongs to the FAM131 family.

The protein is Protein FAM131B (Fam131b) of Mus musculus (Mouse).